Here is a 417-residue protein sequence, read N- to C-terminus: Gamma-glutamyl phosphate reductase (417 aa).

Belongs to the gamma-glutamyl phosphate reductase family.

Its subcellular location is the cytoplasm. The enzyme catalyses L-glutamate 5-semialdehyde + phosphate + NADP(+) = L-glutamyl 5-phosphate + NADPH + H(+). Its pathway is amino-acid biosynthesis; L-proline biosynthesis; L-glutamate 5-semialdehyde from L-glutamate: step 2/2. Functionally, catalyzes the NADPH-dependent reduction of L-glutamate 5-phosphate into L-glutamate 5-semialdehyde and phosphate. The product spontaneously undergoes cyclization to form 1-pyrroline-5-carboxylate. This chain is Gamma-glutamyl phosphate reductase, found in Legionella pneumophila (strain Lens).